We begin with the raw amino-acid sequence, 129 residues long: Small ribosomal subunit protein uS11 (129 aa).

It belongs to the universal ribosomal protein uS11 family. Part of the 30S ribosomal subunit. Interacts with proteins S7 and S18. Binds to IF-3.

In terms of biological role, located on the platform of the 30S subunit, it bridges several disparate RNA helices of the 16S rRNA. Forms part of the Shine-Dalgarno cleft in the 70S ribosome. This chain is Small ribosomal subunit protein uS11, found in Maricaulis maris (strain MCS10) (Caulobacter maris).